Here is an 86-residue protein sequence, read N- to C-terminus: uncharacterized protein (86 aa).

2 helical membrane-spanning segments follow: residues 21 to 43 (VFWVGLVVYYGFVALCWIGEATA) and 53 to 75 (FWYASFLGTFLIPLFMSIIYFYF).

The protein localises to the cell membrane. This is an uncharacterized protein from Archaeoglobus fulgidus (strain ATCC 49558 / DSM 4304 / JCM 9628 / NBRC 100126 / VC-16).